The following is a 146-amino-acid chain: Hemoglobin subunit beta (146 aa).

One can recognise a Globin domain in the interval 2-146 (HWSAEEKQLI…VAHALARKYH (145 aa)). Heme b-binding residues include His-63 and His-92.

Belongs to the globin family. In terms of assembly, heterotetramer of two alpha chains and two beta chains. Red blood cells.

In terms of biological role, involved in oxygen transport from the lung to the various peripheral tissues. The protein is Hemoglobin subunit beta (HBB) of Anser indicus (Bar-headed goose).